Reading from the N-terminus, the 142-residue chain is Large ribosomal subunit protein uL11 (142 aa).

It belongs to the universal ribosomal protein uL11 family. Part of the ribosomal stalk of the 50S ribosomal subunit. Interacts with L10 and the large rRNA to form the base of the stalk. L10 forms an elongated spine to which L12 dimers bind in a sequential fashion forming a multimeric L10(L12)X complex. One or more lysine residues are methylated.

Functionally, forms part of the ribosomal stalk which helps the ribosome interact with GTP-bound translation factors. This Mannheimia succiniciproducens (strain KCTC 0769BP / MBEL55E) protein is Large ribosomal subunit protein uL11.